The sequence spans 601 residues: UvrABC system protein C (601 aa).

Residues Leu-15 to Ile-94 enclose the GIY-YIG domain. The region spanning Gln-202–Leu-237 is the UVR domain.

The protein belongs to the UvrC family. As to quaternary structure, interacts with UvrB in an incision complex.

The protein localises to the cytoplasm. Its function is as follows. The UvrABC repair system catalyzes the recognition and processing of DNA lesions. UvrC both incises the 5' and 3' sides of the lesion. The N-terminal half is responsible for the 3' incision and the C-terminal half is responsible for the 5' incision. This is UvrABC system protein C from Syntrophomonas wolfei subsp. wolfei (strain DSM 2245B / Goettingen).